A 119-amino-acid polypeptide reads, in one-letter code: uncharacterized protein (119 aa).

The first 18 residues, 1-18 (MPAVFMLASSSALQCGRG), serve as a signal peptide directing secretion. The segment at 23-100 (PRTEVGAGHS…MFPGPLRGPA (78 aa)) is disordered. Residues 43–71 (GNQTSVIPATSRQAALGTSWTQRRTQPLQ) show a composition bias toward polar residues. A glycan (N-linked (GlcNAc...) asparagine) is linked at Asn-44.

The protein localises to the secreted. This is an uncharacterized protein from Homo sapiens (Human).